A 273-amino-acid polypeptide reads, in one-letter code: F-actin-capping protein subunit alpha (273 aa).

It belongs to the F-actin-capping protein alpha subunit family. In terms of assembly, component of the F-actin capping complex, composed of a heterodimer of an alpha and a beta subunit.

Its subcellular location is the cytoplasm. The protein resides in the cytoskeleton. It is found in the actin patch. Functionally, F-actin-capping proteins bind in a Ca(2+)-independent manner to the fast growing ends of actin filaments (barbed end) thereby blocking the exchange of subunits at these ends. Unlike other capping proteins (such as gelsolin and severin), these proteins do not sever actin filaments. The sequence is that of F-actin-capping protein subunit alpha (cap1) from Aspergillus oryzae (strain ATCC 42149 / RIB 40) (Yellow koji mold).